Here is a 186-residue protein sequence, read N- to C-terminus: Histone deacetylase complex subunit SAP25 (186 aa).

Disordered stretches follow at residues 1–25 (MSPL…PSCG) and 148–186 (EQTP…GTDT). 2 stretches are compositionally biased toward polar residues: residues 148-163 (EQTP…STSC) and 177-186 (GDQSCSGTDT).

As to quaternary structure, may be a component of the mSIN3A corepressor complex. Interacts with SIN3A and HDAC2. As to expression, widely expressed.

It localises to the nucleus. It is found in the cytoplasm. Its function is as follows. Involved in the transcriptional repression mediated by the mSIN3A but not the N-CoR corepressor complex. The protein is Histone deacetylase complex subunit SAP25 (Sap25) of Mus musculus (Mouse).